A 737-amino-acid polypeptide reads, in one-letter code: Lysyl oxidase homolog 2A (737 aa).

An N-terminal signal peptide occupies residues 1 to 18 (MAVSSALCIFSLLVLAQA). SRCR domains follow at residues 29 to 130 (LRLA…VICN), 159 to 270 (IRPI…VSCV), 294 to 393 (VRLR…VRCN), and 403 to 512 (IRLS…VSCS). 9 disulfide bridges follow: Cys55–Cys119, Cys68–Cys129, Cys99–Cys109, Cys188–Cys259, Cys201–Cys269, Cys235–Cys245, Cys319–Cys382, Cys332–Cys392, and Cys363–Cys373. N-linked (GlcNAc...) asparagine glycosylation is present at Asn256. N-linked (GlcNAc...) asparagine glycosylation occurs at Asn423. Disulfide bonds link Cys432/Cys498, Cys445/Cys511, and Cys479/Cys489. Residues 516 to 718 (PDLVLNAQLV…WTYSCHIGGS (203 aa)) form a lysyl-oxidase like region. Ca(2+) contacts are provided by Asp517 and Leu518. 4 disulfide bridges follow: Cys541–Cys592, Cys547–Cys662, Cys624–Cys640, and Cys630–Cys652. Residues His593, His595, and His597 each coordinate Cu cation. N-linked (GlcNAc...) asparagine glycosylation is present at Asn611. Residues 620-656 (KASFCLEDTHCDEGISKRYHCANFGEQGITVGCWDTY) constitute a cross-link (lysine tyrosylquinone (Lys-Tyr)). Tyr656 is modified (2',4',5'-topaquinone). Residues Glu689, Asp691, Asn694, and Asn695 each coordinate Ca(2+). Cysteines 699 and 713 form a disulfide.

It belongs to the lysyl oxidase family. Requires Cu cation as cofactor. The cofactor is lysine tyrosylquinone residue. Post-translationally, the lysine tyrosylquinone cross-link (LTQ) is generated by condensation of the epsilon-amino group of a lysine with a topaquinone produced by oxidation of tyrosine.

The protein localises to the secreted. It localises to the extracellular space. The protein resides in the extracellular matrix. Its subcellular location is the basement membrane. It is found in the nucleus. The protein localises to the chromosome. It localises to the endoplasmic reticulum. The catalysed reaction is L-lysyl-[protein] + O2 + H2O = (S)-2-amino-6-oxohexanoyl-[protein] + H2O2 + NH4(+). Its function is as follows. Mediates the post-translational oxidative deamination of lysine residues on target proteins leading to the formation of deaminated lysine (allysine). Acts as a transcription corepressor and specifically mediates deamination of trimethylated 'Lys-4' of histone H3 (H3K4me3), a specific tag for epigenetic transcriptional activation. Shows no activity against histone H3 when it is trimethylated on 'Lys-9' (H3K9me3) or 'Lys-27' (H3K27me3) or when 'Lys-4' is monomethylated (H3K4me1) or dimethylated (H3K4me2). Also mediates deamination of methylated TAF10, a member of the transcription factor IID (TFIID) complex, which induces release of TAF10 from promoters, leading to inhibition of TFIID-dependent transcription. LOXL2-mediated deamination of TAF10 results in transcriptional repression of genes required for embryonic stem cell pluripotency. Involved in epithelial to mesenchymal transition (EMT) and participates in repression of E-cadherin, probably by mediating deamination of histone H3. When secreted into the extracellular matrix, promotes cross-linking of extracellular matrix proteins by mediating oxidative deamination of peptidyl lysine residues in precursors to fibrous collagen and elastin. Acts as a regulator of sprouting angiogenesis, probably via collagen IV scaffolding. Acts as a regulator of chondrocyte differentiation, probably by regulating expression of factors that control chondrocyte differentiation. Required with loxl2b for correct expression of Sox2 and for neural differentiation. In Danio rerio (Zebrafish), this protein is Lysyl oxidase homolog 2A (loxl2a).